A 97-amino-acid chain; its full sequence is Integration host factor subunit alpha (97 aa).

It belongs to the bacterial histone-like protein family. As to quaternary structure, heterodimer of an alpha and a beta chain.

Functionally, this protein is one of the two subunits of integration host factor, a specific DNA-binding protein that functions in genetic recombination as well as in transcriptional and translational control. This is Integration host factor subunit alpha from Colwellia psychrerythraea (strain 34H / ATCC BAA-681) (Vibrio psychroerythus).